Consider the following 84-residue polypeptide: Small ribosomal subunit protein bS16 (84 aa).

It belongs to the bacterial ribosomal protein bS16 family.

The protein is Small ribosomal subunit protein bS16 of Cupriavidus pinatubonensis (strain JMP 134 / LMG 1197) (Cupriavidus necator (strain JMP 134)).